We begin with the raw amino-acid sequence, 469 residues long: Acetyl-CoA decarbonylase/synthase complex subunit beta 1 (469 aa).

4 residues coordinate [Ni-Fe-S] cluster: Cys189, Cys192, Cys278, and Cys280.

Belongs to the CdhC family. As to quaternary structure, monomer. The ACDS complex is made up of alpha, epsilon, beta, gamma and delta chains with a probable stoichiometry of (alpha(2)epsilon(2))(4)-beta(8)-(gamma(1)delta(1))(8) (Potential). [Ni-Fe-S] cluster serves as cofactor.

It carries out the reaction Co(I)-[corrinoid Fe-S protein] + acetyl-CoA + H(+) = methyl-Co(III)-[corrinoid Fe-S protein] + CO + CoA. It functions in the pathway one-carbon metabolism; methanogenesis from acetate. Its function is as follows. Part of a complex that catalyzes the reversible cleavage of acetyl-CoA, allowing growth on acetate as sole source of carbon and energy. The alpha-epsilon complex generates CO from CO(2), while the beta subunit (this protein) combines the CO with CoA and a methyl group to form acetyl-CoA. The methyl group, which is incorporated into acetyl-CoA, is transferred to the beta subunit by a corrinoid iron-sulfur protein (the gamma-delta complex). This Methanosarcina mazei (strain ATCC BAA-159 / DSM 3647 / Goe1 / Go1 / JCM 11833 / OCM 88) (Methanosarcina frisia) protein is Acetyl-CoA decarbonylase/synthase complex subunit beta 1 (cdhC1).